The following is a 554-amino-acid chain: Afadin- and alpha-actinin-binding protein A (554 aa).

Coiled coils occupy residues 122-287 (LEYL…SQRK) and 359-449 (ENGL…AIRL). Residues 508–528 (LASSGDYSRRPSKALPITSSS) are disordered.

Belongs to the ADIP family. Interacts with WRAP73.

It is found in the cell junction. It localises to the adherens junction. Its subcellular location is the cytoplasm. The protein localises to the cytoskeleton. The protein resides in the microtubule organizing center. It is found in the centrosome. It localises to the centriolar satellite. Belongs to an adhesion system, which plays a role in the organization of homotypic, interneuronal and heterotypic cell-cell adherens junctions (AJs). Involved in cell movement. Acts as a centrosome maturation factor, probably by maintaining the integrity of the pericentriolar material and proper microtubule nucleation at mitotic spindle poles. The function seems to implicate at least in part WRAP73; the SSX2IP:WRAP73 complex is proposed to act as regulator of spindle anchoring at the mitotic centrosome. This is Afadin- and alpha-actinin-binding protein A (ssx2ip-a) from Xenopus laevis (African clawed frog).